The chain runs to 156 residues: Large ribosomal subunit protein uL22 (156 aa).

The protein belongs to the universal ribosomal protein uL22 family. Part of the 50S ribosomal subunit.

Its function is as follows. This protein binds specifically to 23S rRNA. It makes multiple contacts with different domains of the 23S rRNA in the assembled 50S subunit and ribosome. In terms of biological role, the globular domain of the protein is located near the polypeptide exit tunnel on the outside of the subunit, while an extended beta-hairpin is found that lines the wall of the exit tunnel in the center of the 70S ribosome. This Halobacterium salinarum (strain ATCC 700922 / JCM 11081 / NRC-1) (Halobacterium halobium) protein is Large ribosomal subunit protein uL22.